The primary structure comprises 239 residues: Glutathione S-transferase verG (239 aa).

Residues 18–101 (KPLIFVMEGR…YLSNKYDAKR (84 aa)) enclose the GST N-terminal domain. One can recognise a GST C-terminal domain in the interval 107 to 237 (NAAENLEICN…ELDSRKEIAI (131 aa)).

It belongs to the GST superfamily.

The enzyme catalyses RX + glutathione = an S-substituted glutathione + a halide anion + H(+). Its pathway is mycotoxin biosynthesis. Functionally, glutathione S-transferase; part of the gene cluster that mediates the biosynthesis of 11'-deoxyverticillin A, one of the dimeric epipolythiodioxopiperazines (ETPs) from the verticillin family that act as mycotoxins. 11'-deoxyverticillin A is required for normal conidiation. The nonribosomal peptide synthetase verP is speculated to be responsible for condensation of amino acids to form the carbon skeleton of verticillin, whereas the cluster-specific tailoring enzymes are involved in further modifications leading to the production of 11'-deoxyverticillin A. This is Glutathione S-transferase verG from Clonostachys rogersoniana.